We begin with the raw amino-acid sequence, 201 residues long: Dephospho-CoA kinase (201 aa).

The region spanning 4-201 (AFFVTASIAC…VIQEISKGNM (198 aa)) is the DPCK domain. Residue 12–17 (ACGKST) participates in ATP binding.

It belongs to the CoaE family.

It is found in the cytoplasm. The catalysed reaction is 3'-dephospho-CoA + ATP = ADP + CoA + H(+). The protein operates within cofactor biosynthesis; coenzyme A biosynthesis; CoA from (R)-pantothenate: step 5/5. Catalyzes the phosphorylation of the 3'-hydroxyl group of dephosphocoenzyme A to form coenzyme A. The sequence is that of Dephospho-CoA kinase from Campylobacter jejuni subsp. jejuni serotype O:2 (strain ATCC 700819 / NCTC 11168).